The chain runs to 496 residues: Alanine aminotransferase 1 (496 aa).

The residue at position 2 (alanine 2) is an N-acetylalanine. Threonine 22 is subject to Phosphothreonine. Lysine 314 is subject to N6-(pyridoxal phosphate)lysine.

Belongs to the class-I pyridoxal-phosphate-dependent aminotransferase family. Alanine aminotransferase subfamily. As to quaternary structure, homodimer. The cofactor is pyridoxal 5'-phosphate.

It is found in the cytoplasm. The catalysed reaction is L-alanine + 2-oxoglutarate = pyruvate + L-glutamate. Its pathway is amino-acid degradation; L-alanine degradation via transaminase pathway; pyruvate from L-alanine: step 1/1. In terms of biological role, catalyzes the reversible transamination between alanine and 2-oxoglutarate to form pyruvate and glutamate. Participates in cellular nitrogen metabolism and also in liver gluconeogenesis starting with precursors transported from skeletal muscles. The polypeptide is Alanine aminotransferase 1 (GPT) (Bos taurus (Bovine)).